The chain runs to 421 residues: Myb-related protein Pp2 (421 aa).

HTH myb-type domains are found at residues 9–61 and 62–116; these read KVGL…TNYL and RPDL…KKRL. 2 DNA-binding regions (H-T-H motif) span residues 37–61 and 89–112; these read WRAI…TNYL and WSRI…NTRL. Residues 119 to 240 form a disordered region; it reads QGLDPNTHLP…VTTKSHEDHR (122 aa). Acidic residues predominate over residues 136-147; the sequence is DTEDDTDDEGGD.

The protein resides in the nucleus. Possible transcription activator. The sequence is that of Myb-related protein Pp2 (PP2) from Physcomitrium patens (Spreading-leaved earth moss).